A 184-amino-acid polypeptide reads, in one-letter code: Cbp/p300-interacting transactivator 4 (184 aa).

Low complexity predominate over residues 18–28; sequence PSAAAAHGPHA. Disordered regions lie at residues 18–67 and 94–128; these read PSAA…YGAF and TPYP…PAHA. Residues 104–126 show a composition bias toward pro residues; the sequence is PNAPGGPPGPQPAPSAAAPPPPA.

This sequence belongs to the CITED family. In terms of assembly, interacts via its C-terminal region with the CH1 domain of CREBBP and EP300. Interacts with all TFAP2/AP-2 isoforms. In terms of tissue distribution, expressed in most tissues examined with highest levels of expression in heart, liver, skeletal muscle and pancreas. Also expressed in bladder cell line ECV-304 and in various breast cancer cell lines. Also detected in both in situ and invasive breast tumors where its expression is down-regulated and mostly restricted to the cytoplasm of malignant epithelium. Down-regulation of expression is associated with elevated levels of HIF1A and increased tumor growth and angiogenesis.

It localises to the nucleus. The protein localises to the cytoplasm. Its function is as follows. Acts as a transcriptional coactivator for TFAP2/AP-2. Enhances estrogen-dependent transactivation mediated by estrogen receptors. May function as an inhibitor of transactivation by HIF1A by disrupting HIF1A interaction with CREBBP. May be involved in regulation of gene expression during development and differentiation of blood cells, endothelial cells and mammary epithelial cells. The chain is Cbp/p300-interacting transactivator 4 from Homo sapiens (Human).